The primary structure comprises 222 residues: Eukaryotic translation initiation factor 3 subunit K (222 aa).

One can recognise a PCI domain in the interval Tyr46–Lys208.

Belongs to the eIF-3 subunit K family. In terms of assembly, component of the eukaryotic translation initiation factor 3 (eIF-3) complex. The eIF-3 complex interacts with pix.

The protein resides in the cytoplasm. Its function is as follows. Component of the eukaryotic translation initiation factor 3 (eIF-3) complex, which is involved in protein synthesis of a specialized repertoire of mRNAs and, together with other initiation factors, stimulates binding of mRNA and methionyl-tRNAi to the 40S ribosome. The eIF-3 complex specifically targets and initiates translation of a subset of mRNAs involved in cell proliferation. The chain is Eukaryotic translation initiation factor 3 subunit K from Drosophila virilis (Fruit fly).